The sequence spans 894 residues: MAWRCPRMGRVPLAWCLALCGWACMAPRGTQAEESPFVGNPGNITGARGLTGTLRCQLQVQGEPPEVHWLRDGQILELADSTQTQVPLGEDEQDDWIVVSQLRITSLQLSDTGQYQCLVFLGHQTFVSQPGYVGLEGLPYFLEEPEDRTVAANTPFNLSCQAQGPPEPVDLLWLQDAVPLATAPGHGPQRSLHVPGLNKTSSFSCEAHNAKGVTTSRTATITVLPQQPRNLHLVSRQPTELEVAWTPGLSGIYPLTHCTLQAVLSDDGMGIQAGEPDPPEEPLTSQASVPPHQLRLGSLHPHTPYHIRVACTSSQGPSSWTHWLPVETPEGVPLGPPENISATRNGSQAFVHWQEPRAPLQGTLLGYRLAYQGQDTPEVLMDIGLRQEVTLELQGDGSVSNLTVCVAAYTAAGDGPWSLPVPLEAWRPGQAQPVHQLVKEPSTPAFSWPWWYVLLGAVVAAACVLILALFLVHRRKKETRYGEVFEPTVERGELVVRYRVRKSYSRRTTEATLNSLGISEELKEKLRDVMVDRHKVALGKTLGEGEFGAVMEGQLNQDDSILKVAVKTMKIAICTRSELEDFLSEAVCMKEFDHPNVMRLIGVCFQGSERESFPAPVVILPFMKHGDLHSFLLYSRLGDQPVYLPTQMLVKFMADIASGMEYLSTKRFIHRDLAARNCMLNENMSVCVADFGLSKKIYNGDYYRQGRIAKMPVKWIAIESLADRVYTSKSDVWSFGVTMWEIATRGQTPYPGVENSEIYDYLRQGNRLKQPADCLDGLYALMSRCWELNPQDRPSFTELREDLENTLKALPPAQEPDEILYVNMDEGGGYPEPPGAAGGADPPTQPDPKDSCSCLTAAEVHPAGRYVLCPSTTPSPAQPADRGSPAAPGQEDGA.

The N-terminal stretch at 1 to 25 is a signal peptide; that stretch reads MAWRCPRMGRVPLAWCLALCGWACM. The interaction with GAS6 stretch occupies residues 26–92; that stretch reads APRGTQAEES…QTQVPLGEDE (67 aa). Over 26 to 451 the chain is Extracellular; that stretch reads APRGTQAEES…STPAFSWPWW (426 aa). Ig-like C2-type domains follow at residues 27-128 and 139-222; these read PRGT…TFVS and PYFL…ATIT. Residue Asn-43 is glycosylated (N-linked (GlcNAc...) asparagine). An intrachain disulfide couples Cys-56 to Cys-117. Asn-157 and Asn-198 each carry an N-linked (GlcNAc...) asparagine glycan. An intrachain disulfide couples Cys-160 to Cys-205. Fibronectin type-III domains lie at 227–331 and 336–428; these read QPRN…TPEG and PPEN…AWRP. Residues Asn-339, Asn-345, and Asn-401 are each glycosylated (N-linked (GlcNAc...) asparagine). A helical membrane pass occupies residues 452–472; the sequence is YVLLGAVVAAACVLILALFLV. The Cytoplasmic portion of the chain corresponds to 473-894; the sequence is HRRKKETRYG…PAAPGQEDGA (422 aa). A Protein kinase domain is found at 536-807; sequence VALGKTLGEG…ELREDLENTL (272 aa). ATP-binding positions include 542–550 and Lys-567; that span reads LGEGEFGAV. Residue Asp-672 is the Proton acceptor of the active site. 3 positions are modified to phosphotyrosine; by autocatalysis: Tyr-703, Tyr-779, and Tyr-821. Disordered regions lie at residues 823–853 and 866–894; these read NMDE…DSCS and YVLC…EDGA. Residue Tyr-866 is modified to Phosphotyrosine; by autocatalysis. At Ser-884 the chain carries Phosphoserine.

It belongs to the protein kinase superfamily. Tyr protein kinase family. AXL/UFO subfamily. As to quaternary structure, heterodimer and heterotetramer with ligand GAS6. Interacts with CBL, GRB2, LCK, NCK2, PIK3R1, PIK3R2, PIK3R3, PLCG1, SOCS1 and TNS2. Part of a complex including AXL, TNK2 and GRB2, in which GRB2 promotes AXL recruitment by TNK2. Monoubiquitinated upon GAS6-binding. A very small proportion of the receptor could be subjected to polyubiquitination in a very transient fashion. In terms of processing, phosphorylated at tyrosine residues by autocatalysis, which activates kinase activity. As to expression, highly expressed in metastatic colon tumors. Expressed in primary colon tumors. Weakly expressed in normal colon tissue.

It is found in the cell membrane. It catalyses the reaction L-tyrosyl-[protein] + ATP = O-phospho-L-tyrosyl-[protein] + ADP + H(+). With respect to regulation, activated by GAS6-binding and subsequent autophosphorylation. Functionally, receptor tyrosine kinase that transduces signals from the extracellular matrix into the cytoplasm by binding growth factor GAS6 and which is thus regulating many physiological processes including cell survival, cell proliferation, migration and differentiation. Ligand binding at the cell surface induces dimerization and autophosphorylation of AXL. Following activation by ligand, AXL binds and induces tyrosine phosphorylation of PI3-kinase subunits PIK3R1, PIK3R2 and PIK3R3; but also GRB2, PLCG1, LCK and PTPN11. Other downstream substrate candidates for AXL are CBL, NCK2, SOCS1 and TNS2. Recruitment of GRB2 and phosphatidylinositol 3 kinase regulatory subunits by AXL leads to the downstream activation of the AKT kinase. GAS6/AXL signaling plays a role in various processes such as endothelial cell survival during acidification by preventing apoptosis, optimal cytokine signaling during human natural killer cell development, hepatic regeneration, gonadotropin-releasing hormone neuron survival and migration, platelet activation, or regulation of thrombotic responses. Also plays an important role in inhibition of Toll-like receptors (TLRs)-mediated innate immune response. (Microbial infection) Acts as a receptor for lassa virus and lymphocytic choriomeningitis virus, possibly through GAS6 binding to phosphatidyl-serine at the surface of virion envelope. Its function is as follows. (Microbial infection) Acts as a receptor for Ebolavirus, possibly through GAS6 binding to phosphatidyl-serine at the surface of virion envelope. In terms of biological role, (Microbial infection) Promotes Zika virus entry in glial cells, Sertoli cells and astrocytes. Additionally, Zika virus potentiates AXL kinase activity to antagonize type I interferon signaling and thereby promotes infection. Interferon signaling inhibition occurs via an SOCS1-dependent mechanism. The polypeptide is Tyrosine-protein kinase receptor UFO (AXL) (Homo sapiens (Human)).